The primary structure comprises 328 residues: 6-phosphogluconolactonase (328 aa).

This sequence belongs to the cycloisomerase 2 family.

It carries out the reaction 6-phospho-D-glucono-1,5-lactone + H2O = 6-phospho-D-gluconate + H(+). It participates in carbohydrate degradation; pentose phosphate pathway; D-ribulose 5-phosphate from D-glucose 6-phosphate (oxidative stage): step 2/3. Its function is as follows. Catalyzes the hydrolysis of 6-phosphogluconolactone to 6-phosphogluconate. The polypeptide is 6-phosphogluconolactonase (Xenorhabdus nematophila (strain ATCC 19061 / DSM 3370 / CCUG 14189 / LMG 1036 / NCIMB 9965 / AN6)).